We begin with the raw amino-acid sequence, 171 residues long: Shikimate kinase (171 aa).

14-19 (GAGKST) lines the ATP pocket. Residue Ser-18 participates in Mg(2+) binding. 3 residues coordinate substrate: Asp-36, Arg-60, and Gly-82. Arg-120 contacts ATP. Arg-139 is a binding site for substrate. Gln-156 is a binding site for ATP.

It belongs to the shikimate kinase family. Monomer. Mg(2+) is required as a cofactor.

The protein resides in the cytoplasm. The enzyme catalyses shikimate + ATP = 3-phosphoshikimate + ADP + H(+). Its pathway is metabolic intermediate biosynthesis; chorismate biosynthesis; chorismate from D-erythrose 4-phosphate and phosphoenolpyruvate: step 5/7. Catalyzes the specific phosphorylation of the 3-hydroxyl group of shikimic acid using ATP as a cosubstrate. This chain is Shikimate kinase, found in Shewanella putrefaciens (strain CN-32 / ATCC BAA-453).